A 440-amino-acid chain; its full sequence is Enolase (440 aa).

Q163 contacts (2R)-2-phosphoglycerate. The Proton donor role is filled by E205. Mg(2+) is bound by residues D242, E288, and D315. Residues K340, R369, S370, and K391 each contribute to the (2R)-2-phosphoglycerate site. K340 (proton acceptor) is an active-site residue.

It belongs to the enolase family. Mg(2+) is required as a cofactor.

It is found in the cytoplasm. Its subcellular location is the secreted. The protein resides in the cell surface. It carries out the reaction (2R)-2-phosphoglycerate = phosphoenolpyruvate + H2O. It functions in the pathway carbohydrate degradation; glycolysis; pyruvate from D-glyceraldehyde 3-phosphate: step 4/5. Its function is as follows. Catalyzes the reversible conversion of 2-phosphoglycerate (2-PG) into phosphoenolpyruvate (PEP). It is essential for the degradation of carbohydrates via glycolysis. The sequence is that of Enolase from Pediococcus pentosaceus (strain ATCC 25745 / CCUG 21536 / LMG 10740 / 183-1w).